Here is a 155-residue protein sequence, read N- to C-terminus: Putative pre-16S rRNA nuclease (155 aa).

Belongs to the YqgF nuclease family.

Its subcellular location is the cytoplasm. Its function is as follows. Could be a nuclease involved in processing of the 5'-end of pre-16S rRNA. This is Putative pre-16S rRNA nuclease from Xanthomonas axonopodis pv. citri (strain 306).